The chain runs to 524 residues: Solute carrier family 35 member F5 (524 aa).

Residues 1–22 (MVPPRHHPGAGRPGALSSSPPF) are disordered. Residues 13–22 (PGALSSSPPF) show a composition bias toward low complexity. The next 2 helical transmembrane spans lie at 69–89 (MALGIVILLLVDVIWVASSEL) and 101–121 (FFSTFAKTSMFVLYLLGFIVW). Serine 207 bears the Phosphoserine mark. Helical transmembrane passes span 244 to 264 (ISFFFCFVWFLANFSYQEALS), 269 to 289 (AIVNILSSTSGLFTLILAAMF), 297 to 317 (FTLSKLLAVILSIGGVVLVNL), 328 to 348 (TIGSIWSLVGAMLYAVYIVMI), 362 to 382 (MFFGFVGLFNLLLLWPGFFLL), 396 to 416 (VVLMCIVINGLIGTVLSEFLW), 421 to 441 (FLTSSLIGTLALSLTIPLSII), and 453 to 473 (WLFFAGAIPVFFSFFIATLLC). Residues 253–317 (FLANFSYQEA…SIGGVVLVNL (65 aa)) form the EamA domain.

This sequence belongs to the SLC35F solute transporter family.

The protein localises to the membrane. Its function is as follows. Putative solute transporter. The sequence is that of Solute carrier family 35 member F5 (SLC35F5) from Bos taurus (Bovine).